Here is a 225-residue protein sequence, read N- to C-terminus: Endo-1,4-beta-xylanase (225 aa).

The N-terminal stretch at 1–31 is a signal peptide; it reads MVGFTPVALAALAATGALAFPAGNATELEKR. At Gln32 the chain carries Pyrrolidone carboxylic acid. The region spanning 32–222 is the GH11 domain; that stretch reads QTTPNSEGWH…SSGYARITVA (191 aa). The active-site Nucleophile is Glu117. A disulfide bridge links Cys141 with Cys185. Glu209 serves as the catalytic Proton donor.

It carries out the reaction Endohydrolysis of (1-&gt;4)-beta-D-xylosidic linkages in xylans.. Its pathway is glycan degradation; xylan degradation. The sequence is that of Endo-1,4-beta-xylanase (XYNA) from Thermomyces lanuginosus (Humicola lanuginosa).